The primary structure comprises 312 residues: tRNA pseudouridine synthase B (312 aa).

The Nucleophile role is filled by Asp-49.

This sequence belongs to the pseudouridine synthase TruB family. Type 1 subfamily.

It catalyses the reaction uridine(55) in tRNA = pseudouridine(55) in tRNA. In terms of biological role, responsible for synthesis of pseudouridine from uracil-55 in the psi GC loop of transfer RNAs. This is tRNA pseudouridine synthase B from Chelativorans sp. (strain BNC1).